A 277-amino-acid chain; its full sequence is Probable diphthine methyl ester synthase (277 aa).

S-adenosyl-L-methionine is bound by residues Leu9, Asp89, Gly92, 117-118, Leu168, Leu227, and His252; that span reads SV.

The protein belongs to the diphthine synthase family.

It catalyses the reaction 2-[(3S)-amino-3-carboxypropyl]-L-histidyl-[translation elongation factor 2] + 4 S-adenosyl-L-methionine = diphthine methyl ester-[translation elongation factor 2] + 4 S-adenosyl-L-homocysteine + 3 H(+). The protein operates within protein modification; peptidyl-diphthamide biosynthesis. Its function is as follows. S-adenosyl-L-methionine-dependent methyltransferase that catalyzes four methylations of the modified target histidine residue in translation elongation factor 2 (EF-2), to form an intermediate called diphthine methyl ester. The four successive methylation reactions represent the second step of diphthamide biosynthesis. In Arabidopsis thaliana (Mouse-ear cress), this protein is Probable diphthine methyl ester synthase.